A 357-amino-acid chain; its full sequence is UDP-N-acetylglucosamine--N-acetylmuramyl-(pentapeptide) pyrophosphoryl-undecaprenol N-acetylglucosamine transferase (357 aa).

UDP-N-acetyl-alpha-D-glucosamine contacts are provided by residues 13 to 15 (SAG), Arg-166, Ser-196, and Gln-291.

It belongs to the glycosyltransferase 28 family. MurG subfamily.

It localises to the cell membrane. The enzyme catalyses di-trans,octa-cis-undecaprenyl diphospho-N-acetyl-alpha-D-muramoyl-L-alanyl-D-glutamyl-meso-2,6-diaminopimeloyl-D-alanyl-D-alanine + UDP-N-acetyl-alpha-D-glucosamine = di-trans,octa-cis-undecaprenyl diphospho-[N-acetyl-alpha-D-glucosaminyl-(1-&gt;4)]-N-acetyl-alpha-D-muramoyl-L-alanyl-D-glutamyl-meso-2,6-diaminopimeloyl-D-alanyl-D-alanine + UDP + H(+). Its pathway is cell wall biogenesis; peptidoglycan biosynthesis. Its function is as follows. Cell wall formation. Catalyzes the transfer of a GlcNAc subunit on undecaprenyl-pyrophosphoryl-MurNAc-pentapeptide (lipid intermediate I) to form undecaprenyl-pyrophosphoryl-MurNAc-(pentapeptide)GlcNAc (lipid intermediate II). The sequence is that of UDP-N-acetylglucosamine--N-acetylmuramyl-(pentapeptide) pyrophosphoryl-undecaprenol N-acetylglucosamine transferase from Clostridium perfringens (strain ATCC 13124 / DSM 756 / JCM 1290 / NCIMB 6125 / NCTC 8237 / Type A).